A 338-amino-acid polypeptide reads, in one-letter code: ATPase GET3 (338 aa).

Residue 33–40 (KGGVGKTT) coordinates ATP. Asp-62 is an active-site residue. Residues Glu-242 and Asn-269 each contribute to the ATP site. Residues Cys-280 and Cys-283 each coordinate Zn(2+).

The protein belongs to the arsA ATPase family. As to quaternary structure, homodimer.

The protein localises to the cytoplasm. It localises to the endoplasmic reticulum. In terms of biological role, ATPase required for the post-translational delivery of tail-anchored (TA) proteins to the endoplasmic reticulum. Recognizes and selectively binds the transmembrane domain of TA proteins in the cytosol. This complex then targets to the endoplasmic reticulum by membrane-bound receptors, where the tail-anchored protein is released for insertion. This process is regulated by ATP binding and hydrolysis. ATP binding drives the homodimer towards the closed dimer state, facilitating recognition of newly synthesized TA membrane proteins. ATP hydrolysis is required for insertion. Subsequently, the homodimer reverts towards the open dimer state, lowering its affinity for the membrane-bound receptor, and returning it to the cytosol to initiate a new round of targeting. The protein is ATPase GET3 of Uncinocarpus reesii (strain UAMH 1704).